The sequence spans 427 residues: Serine/arginine (SR)-type shuttling mRNA binding protein GBP2 (427 aa).

A disordered region spans residues 1 to 101 (MERELGMYGN…GRGGGRGRTL (101 aa)). The span at 22–32 (RLSDDRDRYDD) shows a compositional bias: basic and acidic residues. Residue Ser-24 is modified to Phosphoserine. A compositionally biased stretch (low complexity) spans 35–44 (DSSSNNGNGS). Positions 50–60 (DRGSRFNDRYD) are enriched in basic and acidic residues. 2 consecutive RRM domains span residues 122–198 (NSIF…QDNP) and 219–296 (FEVF…EGRF). Position 130 is a phosphothreonine (Thr-130). Positions 300–317 (KNNDRYNQRREDLEDTRG) are enriched in basic and acidic residues. Positions 300–319 (KNNDRYNQRREDLEDTRGTE) are disordered. One can recognise an RRM 3 domain in the interval 349 to 426 (CFIYCSNLPF…CSLQISYARR (78 aa)).

Methylated by HMT1.

The protein localises to the cytoplasm. It is found in the nucleus. It localises to the chromosome. The protein resides in the telomere. Its subcellular location is the P-body. The protein localises to the stress granule. Functionally, binds to intron-containing transcripts and is involved in quality control for the export of spliced mRNAs from the nucleus. Binds to pre-mRNAs until splicing is completed or until faulty mRNAs are degraded. On correctly spliced mRNAs, GBP2 and HRB1 recruit MEX67 to allow nuclear export. On faulty mRNAs, GBP2 and HRB1 associate with the TRAMP complex that guides those pre-mRNAs to the exosome for degradation. Binds single-stranded telomeric sequences of the type (TG[1-3])n in vitro. Influences the localization of RAP1 in the nuclei. Involved in modulating telomere length. The chain is Serine/arginine (SR)-type shuttling mRNA binding protein GBP2 from Saccharomyces cerevisiae (strain ATCC 204508 / S288c) (Baker's yeast).